The sequence spans 255 residues: Acetylglutamate kinase (255 aa).

Substrate-binding positions include 40 to 41 (GG), Arg62, and Asn153.

The protein belongs to the acetylglutamate kinase family. ArgB subfamily.

The protein localises to the cytoplasm. It catalyses the reaction N-acetyl-L-glutamate + ATP = N-acetyl-L-glutamyl 5-phosphate + ADP. The protein operates within amino-acid biosynthesis; L-arginine biosynthesis; N(2)-acetyl-L-ornithine from L-glutamate: step 2/4. In terms of biological role, catalyzes the ATP-dependent phosphorylation of N-acetyl-L-glutamate. This Bacillus anthracis (strain CDC 684 / NRRL 3495) protein is Acetylglutamate kinase.